The following is a 99-amino-acid chain: Putative protein adenylyltransferase MJ0141 (99 aa).

Positions 29–43 match the GSX(10)DXD motif motif; that stretch reads GSYARGDYDEESDVD. Mg(2+)-binding residues include aspartate 41 and aspartate 43.

The protein belongs to the MntA antitoxin family. Requires Mg(2+) as cofactor.

The enzyme catalyses L-tyrosyl-[protein] + ATP = O-(5'-adenylyl)-L-tyrosyl-[protein] + diphosphate. It carries out the reaction O-(5'-adenylyl)-L-tyrosyl-[protein] + ATP = O-[5'-(adenylyl-(5'-&gt;3')-adenylyl)]-L-tyrosyl-[protein] + diphosphate. Functionally, putative antitoxin component of a putative type VII toxin-antitoxin (TA) system. Its cognate toxin might be MF0142, which it might AMPylate. This Methanocaldococcus jannaschii (strain ATCC 43067 / DSM 2661 / JAL-1 / JCM 10045 / NBRC 100440) (Methanococcus jannaschii) protein is Putative protein adenylyltransferase MJ0141.